The sequence spans 815 residues: Probable E3 ubiquitin-protein ligase hulA (815 aa).

Residues 1-112 (MGSNLPSQPN…EMGGDEMLTR (112 aa)) form the C2 domain. Disordered stretches follow at residues 134–237 (NLST…GWER) and 253–353 (RTTT…YFVD). 2 stretches are compositionally biased toward low complexity: residues 165–185 (ASAAHPAASPAPIDPAASNPS) and 202–212 (APGAAAGATPT). Composition is skewed to polar residues over residues 213–226 (NTQGSRTNLSSFED) and 253–270 (RTTTWTRPSSNYNEQTQR). The region spanning 229–262 (GRLPAGWERREDNLGRTYYVDHNTRTTTWTRPSS) is the WW 1 domain. Positions 279–294 (LERRAHQSRMLPEDRT) are enriched in basic and acidic residues. Over residues 295–308 (GANSPNLPETSQQA) the composition is skewed to polar residues. Residues 324–333 (ATGATTAGTG) show a composition bias toward low complexity. WW domains lie at 333 to 366 (GELPPGWEQRTTPEGRPYFVDHNTRTTTWVDPRR) and 393 to 426 (GPLPSGWEMRLTNTARVYFVDHNTKTTTWDDPRL). One can recognise an HECT domain in the interval 482–815 (SASDLKKRLM…VEETLGFGQE (334 aa)). Residue C783 is the Glycyl thioester intermediate of the active site.

This sequence belongs to the RSP5/NEDD4 family. As to quaternary structure, interacts with creD.

It localises to the cytoplasm. It catalyses the reaction S-ubiquitinyl-[E2 ubiquitin-conjugating enzyme]-L-cysteine + [acceptor protein]-L-lysine = [E2 ubiquitin-conjugating enzyme]-L-cysteine + N(6)-ubiquitinyl-[acceptor protein]-L-lysine.. It participates in protein modification; protein ubiquitination. Functionally, E3 ubiquitin-protein ligase which accepts ubiquitin from an E2 ubiquitin-conjugating enzyme in the form of a thioester and then directly transfers the ubiquitin to targeted substrates. Probably involved in the regulatory network controlling carbon source utilization. This chain is Probable E3 ubiquitin-protein ligase hulA (hulA), found in Aspergillus clavatus (strain ATCC 1007 / CBS 513.65 / DSM 816 / NCTC 3887 / NRRL 1 / QM 1276 / 107).